Consider the following 383-residue polypeptide: Putative glutamate--cysteine ligase 2-2 (383 aa).

Belongs to the glutamate--cysteine ligase type 2 family. YbdK subfamily.

The enzyme catalyses L-cysteine + L-glutamate + ATP = gamma-L-glutamyl-L-cysteine + ADP + phosphate + H(+). In terms of biological role, ATP-dependent carboxylate-amine ligase which exhibits weak glutamate--cysteine ligase activity. The protein is Putative glutamate--cysteine ligase 2-2 of Paenarthrobacter aurescens (strain TC1).